The sequence spans 212 residues: MLRSPYSGGHLEVVVGPMFSGKSEELIRRLTRSLIARQRVAVFKPAIDNRYHASEVASHAGRTLEAVAVPDAQAIRAQLSGQGELLSAAPEGVDVIGIDEAQFFGPELVPLVLELADAGVRVVLAGLDLDFRAEPFGSMPELLARAESVDKLTAICTVCGAPATRTQRLIGGQPARFDDPVVLVGAQESYEALPRAPHRAQGGVTTPSPLAS.

ATP is bound by residues 16-23 (GPMFSGKS) and 99-102 (DEAQ). The Proton acceptor role is filled by Glu100.

It belongs to the thymidine kinase family. Homotetramer.

Its subcellular location is the cytoplasm. The catalysed reaction is thymidine + ATP = dTMP + ADP + H(+). This is Thymidine kinase from Deinococcus radiodurans (strain ATCC 13939 / DSM 20539 / JCM 16871 / CCUG 27074 / LMG 4051 / NBRC 15346 / NCIMB 9279 / VKM B-1422 / R1).